The primary structure comprises 185 residues: Ribosome-recycling factor (185 aa).

Belongs to the RRF family.

It localises to the cytoplasm. In terms of biological role, responsible for the release of ribosomes from messenger RNA at the termination of protein biosynthesis. May increase the efficiency of translation by recycling ribosomes from one round of translation to another. The protein is Ribosome-recycling factor of Methylococcus capsulatus (strain ATCC 33009 / NCIMB 11132 / Bath).